The following is a 458-amino-acid chain: Bifunctional protein GlmU (458 aa).

Residues 1–230 (MLQIDVVILA…DWEVVGVNDK (230 aa)) form a pyrophosphorylase region. Residues 9-12 (LAAG), Lys23, Gln75, and 80-81 (GT) contribute to the UDP-N-acetyl-alpha-D-glucosamine site. A Mg(2+)-binding site is contributed by Asp104. UDP-N-acetyl-alpha-D-glucosamine contacts are provided by Gly139, Glu155, Asn170, and Asn228. Asn228 is a Mg(2+) binding site. Positions 231–251 (IQLSTLERAHQQDVAKGLMEQ) are linker. Positions 252-458 (GVMFADPARF…NWKRPKKNKD (207 aa)) are N-acetyltransferase. The UDP-N-acetyl-alpha-D-glucosamine site is built by Arg334 and Lys352. The active-site Proton acceptor is the His364. Positions 367 and 378 each coordinate UDP-N-acetyl-alpha-D-glucosamine. Residues Ala381, 387–388 (NY), Ser406, Ala424, and Arg441 each bind acetyl-CoA.

In the N-terminal section; belongs to the N-acetylglucosamine-1-phosphate uridyltransferase family. The protein in the C-terminal section; belongs to the transferase hexapeptide repeat family. In terms of assembly, homotrimer. Requires Mg(2+) as cofactor.

It is found in the cytoplasm. The enzyme catalyses alpha-D-glucosamine 1-phosphate + acetyl-CoA = N-acetyl-alpha-D-glucosamine 1-phosphate + CoA + H(+). It catalyses the reaction N-acetyl-alpha-D-glucosamine 1-phosphate + UTP + H(+) = UDP-N-acetyl-alpha-D-glucosamine + diphosphate. The protein operates within nucleotide-sugar biosynthesis; UDP-N-acetyl-alpha-D-glucosamine biosynthesis; N-acetyl-alpha-D-glucosamine 1-phosphate from alpha-D-glucosamine 6-phosphate (route II): step 2/2. It participates in nucleotide-sugar biosynthesis; UDP-N-acetyl-alpha-D-glucosamine biosynthesis; UDP-N-acetyl-alpha-D-glucosamine from N-acetyl-alpha-D-glucosamine 1-phosphate: step 1/1. It functions in the pathway bacterial outer membrane biogenesis; LPS lipid A biosynthesis. In terms of biological role, catalyzes the last two sequential reactions in the de novo biosynthetic pathway for UDP-N-acetylglucosamine (UDP-GlcNAc). The C-terminal domain catalyzes the transfer of acetyl group from acetyl coenzyme A to glucosamine-1-phosphate (GlcN-1-P) to produce N-acetylglucosamine-1-phosphate (GlcNAc-1-P), which is converted into UDP-GlcNAc by the transfer of uridine 5-monophosphate (from uridine 5-triphosphate), a reaction catalyzed by the N-terminal domain. In Nitrosomonas eutropha (strain DSM 101675 / C91 / Nm57), this protein is Bifunctional protein GlmU.